The primary structure comprises 731 residues: Anaphase-promoting complex subunit 2 (731 aa).

This sequence belongs to the cullin family. As to quaternary structure, the APC/C is probably composed of at least 12 subunits: apc-2, apc-10, apc-11, cdc-26, emb-1, emb-27, emb-30, mat-1, mat-2, mat-3, such-1 and gfi-3.

It participates in protein modification; protein ubiquitination. Its function is as follows. Probable component of the anaphase promoting complex/cyclosome (APC/C), a cell cycle-regulated ubiquitin ligase that controls progression through mitosis and the G1 phase of the cell cycle. The APC/C complex acts by mediating ubiquitination and subsequent degradation of target proteins. Developmental role in early embryogenesis and the metaphase to anaphase transition in meiosis and mitosis. The chain is Anaphase-promoting complex subunit 2 from Caenorhabditis elegans.